The primary structure comprises 3189 residues: Beauvericin nonribosomal cyclodepsipeptide synthetase (3189 aa).

The tract at residues 73-466 (HAMYEISQHV…EQLQSAADDA (394 aa)) is condensation 1. The tract at residues 202–223 (DSLPLTPDSSGGSDSDSPSTLK) is disordered. Residues 208–220 (PDSSGGSDSDSPS) are compositionally biased toward low complexity. The adenylation 1 stretch occupies residues 507 to 901 (AESPSDPAVL…GRIDSQVKIR (395 aa)). The region spanning 1036-1112 (TLETGPEARL…RLQAVMSGDS (77 aa)) is the Carrier 1 domain. Ser1073 is modified (O-(pantetheine 4'-phosphoryl)serine). The interval 1136 to 1569 (SYSQGRLWFL…KSLISVLPLT (434 aa)) is condensation 2. Residues 1599–2004 (FRSQVATCPD…GRMDFQFKIR (406 aa)) form an adenylation 2 region. Residues 2072 to 2211 (MYNGIDAISP…FPTVEYLTRV (140 aa)) form an S-adenosyl-L-methionine-dependent N-methyltransferase region. 2 consecutive Carrier domains span residues 2557 to 2631 (CPIS…REGL) and 2654 to 2728 (APRN…ELGQ). O-(pantetheine 4'-phosphoryl)serine is present on residues Ser2591 and Ser2688. Residues 2773–3181 (QDVYPATHMQ…AYLMEEVCRL (409 aa)) are condensation 3.

This sequence belongs to the NRP synthetase family.

The catalysed reaction is 3 (R)-2-hydroxy-3-methylbutanoate + 3 L-phenylalanine + 3 S-adenosyl-L-methionine + 6 ATP = beauvericin + 6 AMP + 3 S-adenosyl-L-homocysteine + 6 diphosphate + 6 H(+). Functionally, beauvericin nonribosomal cyclodepsipeptide synthetase; part of the gene cluster that mediates the biosynthesis of beauvericin (BEA), a non-ribosomal cyclic hexadepsipeptide that shows antibiotic, antifungal, insecticidal, and cancer cell antiproliferative and antihaptotactic activity. Ketoisovalerate reductase BEA2 catalyzes the NADPH-specific reduction of ketoisovaleric acid to hydroxyisovalerate, a precursor for beauvericin biosynthesis. The nonribosomal cyclodepsipeptide synthetase BEA1 then catalyzes the formation of beauvericin via condensation and cyclization of 3 dipeptidol monomers, each composed of one unit of hydroxyisovalerate and one unit of N-methyl-phenylalanine. This is Beauvericin nonribosomal cyclodepsipeptide synthetase (Beas) from Beauveria bassiana (White muscardine disease fungus).